A 1053-amino-acid chain; its full sequence is DNA-directed RNA polymerase subunit beta' (1053 aa).

Residues cysteine 60, cysteine 62, cysteine 75, and cysteine 78 each contribute to the Zn(2+) site. Residues aspartate 449, aspartate 451, and aspartate 453 each contribute to the Mg(2+) site.

This sequence belongs to the RNA polymerase beta' chain family. In terms of assembly, the RNAP catalytic core consists of 2 alpha, 1 beta, 1 beta' and 1 omega subunit. When a sigma factor is associated with the core the holoenzyme is formed, which can initiate transcription. The cofactor is Mg(2+). Zn(2+) serves as cofactor.

The catalysed reaction is RNA(n) + a ribonucleoside 5'-triphosphate = RNA(n+1) + diphosphate. DNA-dependent RNA polymerase catalyzes the transcription of DNA into RNA using the four ribonucleoside triphosphates as substrates. The sequence is that of DNA-directed RNA polymerase subunit beta' from Brochothrix thermosphacta (Microbacterium thermosphactum).